A 469-amino-acid chain; its full sequence is Keratin, type I cytoskeletal 26 (469 aa).

The head stretch occupies residues 1–82 (MSFRLSSGSR…ENEHGLLPGN (82 aa)). Residues 83–118 (EKVTLQNLNDRLASYLDHVCTLEEANADLEQKIKGW) are coil 1A. An IF rod domain is found at 83-398 (EKVTLQNLND…KLIDGEGRKS (316 aa)). Residues 119–140 (YEKYGPGSGRQLAYDCSKYFSV) form a linker 1 region. Residues 141 to 232 (TEDLKRQIIS…KNHQEEMKVM (92 aa)) are coil 1B. Residues 233 to 255 (QGAAGGNVNVEINAAPGVDLTVL) are linker 12. The segment at 256–394 (LNNMRAEYED…EMYCKLIDGE (139 aa)) is coil 2. Residues 395–465 (GRKSKSTYCK…NITMEQRLPS (71 aa)) are tail. Disordered stretches follow at residues 398–421 (SKST…KDSK) and 450–469 (KSSK…KVPQ). Over residues 405–421 (SEGRGPKNSENQVKDSK) the composition is skewed to basic and acidic residues.

Belongs to the intermediate filament family. Heterotetramer of two type I and two type II keratins.

The protein is Keratin, type I cytoskeletal 26 of Bos taurus (Bovine).